A 268-amino-acid chain; its full sequence is MIKTVLFGACGKMGKVIGKALIDATDIELVGAIDPYFKGEKYEKIIGIDKISLEVVESIDELQEDFDVAIDFTNAEAAYQNIKKVLQKGKRMVVGTTGLTQEMMEEFKDLAVKNKTAILIAPNFALGAVLMIQLAKQVVKYFPDVEIIELHHNEKADAPSGTAILTAEVLREEMKKYNLTHKDATKIEKLPGARGGKLDSINIHSVRLPGLVAHQEVIFGGLGQTLSIRHDALSRECYIPGVLMAVREIVKREGFFYGLESFLNREEA.

NAD(+)-binding positions include 8–13 (GACGKM), D34, 95–97 (GTT), and 121–124 (APNF). The active-site Proton donor/acceptor is H151. H152 contacts (S)-2,3,4,5-tetrahydrodipicolinate. The active-site Proton donor is the K155. 161 to 162 (GT) contacts (S)-2,3,4,5-tetrahydrodipicolinate.

It belongs to the DapB family.

It localises to the cytoplasm. The catalysed reaction is (S)-2,3,4,5-tetrahydrodipicolinate + NAD(+) + H2O = (2S,4S)-4-hydroxy-2,3,4,5-tetrahydrodipicolinate + NADH + H(+). It catalyses the reaction (S)-2,3,4,5-tetrahydrodipicolinate + NADP(+) + H2O = (2S,4S)-4-hydroxy-2,3,4,5-tetrahydrodipicolinate + NADPH + H(+). The protein operates within amino-acid biosynthesis; L-lysine biosynthesis via DAP pathway; (S)-tetrahydrodipicolinate from L-aspartate: step 4/4. Its function is as follows. Catalyzes the conversion of 4-hydroxy-tetrahydrodipicolinate (HTPA) to tetrahydrodipicolinate. This Dictyoglomus turgidum (strain DSM 6724 / Z-1310) protein is 4-hydroxy-tetrahydrodipicolinate reductase.